The primary structure comprises 952 residues: DNA translocase SftA (952 aa).

Residues 15 to 468 are disordered; that stretch reads SEEDAERETK…KGPSVPFNVM (454 aa). Composition is skewed to basic and acidic residues over residues 33–49, 93–104, 134–169, and 200–215; these read EVHH…DPKI, YRERPRNEEEQH, VKKD…RERG, and NRKD…KRPA. Over residues 237–250 the composition is skewed to low complexity; it reads FFPAEQAEEQTPPE. 4 stretches are compositionally biased toward basic and acidic residues: residues 278–287, 310–329, 343–358, and 391–413; these read REQQPEKFEE, EDEK…HENA, MDIR…HEYS, and QETK…HMEQ. Over residues 414–423 the composition is skewed to polar residues; it reads GSKSSTATLE. The span at 424 to 452 shows a compositional bias: basic and acidic residues; the sequence is NRQEIRADKPREASEEPKKRPGVQEKRTE. The FtsK domain maps to 622 to 813; the sequence is GNPVVIDLKK…FSVSSQVDSR (192 aa). An ATP-binding site is contributed by 639-646; it reads GATGSGKS.

Belongs to the FtsK/SpoIIIE/SftA family. As to quaternary structure, homohexamer.

The protein localises to the cytoplasm. Required for the accurate completion of chromosome partitioning, in part by promoting efficient resolution of chromosome dimers, before the formation of the division septum. Binds to DNA in a non-specific manner. Shows ATPase activity. Not required for cytokinesis. The protein is DNA translocase SftA (sftA) of Bacillus subtilis (strain 168).